Consider the following 486-residue polypeptide: Probable glycine dehydrogenase (decarboxylating) subunit 2 (486 aa).

Residues 1–26 (MLIFESSRPGRQARAQAPKPTAATND) are disordered. Lysine 264 bears the N6-(pyridoxal phosphate)lysine mark.

The protein belongs to the GcvP family. C-terminal subunit subfamily. As to quaternary structure, the glycine cleavage system is composed of four proteins: P, T, L and H. In this organism, the P 'protein' is a heterodimer of two subunits. Pyridoxal 5'-phosphate serves as cofactor.

It catalyses the reaction N(6)-[(R)-lipoyl]-L-lysyl-[glycine-cleavage complex H protein] + glycine + H(+) = N(6)-[(R)-S(8)-aminomethyldihydrolipoyl]-L-lysyl-[glycine-cleavage complex H protein] + CO2. Its function is as follows. The glycine cleavage system catalyzes the degradation of glycine. The P protein binds the alpha-amino group of glycine through its pyridoxal phosphate cofactor; CO(2) is released and the remaining methylamine moiety is then transferred to the lipoamide cofactor of the H protein. This Nitrosococcus oceani (strain ATCC 19707 / BCRC 17464 / JCM 30415 / NCIMB 11848 / C-107) protein is Probable glycine dehydrogenase (decarboxylating) subunit 2.